Here is a 142-residue protein sequence, read N- to C-terminus: Chorion class A protein Ld12 (142 aa).

The first 18 residues, 1-18 (MNSFALLLVCIQACLVQS), serve as a signal peptide directing secretion.

The protein belongs to the chorion protein family.

This protein is one of many from the eggshell of the gypsy moth. The polypeptide is Chorion class A protein Ld12 (Lymantria dispar (Gypsy moth)).